Reading from the N-terminus, the 511-residue chain is BAR/IMD domain-containing adapter protein 2-like 1 (511 aa).

The IMD domain occupies 1 to 249 (MSRGPEEVNR…MNMIEEIKTP (249 aa)). Residues 115 to 154 (MNATLKRYQTEHKNKLESLEKSQAELKKIRRKSQGSRNAL) adopt a coiled-coil conformation. A phosphothreonine mark is found at Thr-248 and Thr-257. A phosphoserine mark is found at Ser-261 and Ser-281. Residues 302-328 (NNPATAAPNSQRVNNSTGTSEDPSLQR) form a disordered region. The span at 303–328 (NPATAAPNSQRVNNSTGTSEDPSLQR) shows a compositional bias: polar residues. A phosphoserine mark is found at Ser-331 and Ser-354. Positions 339–402 (MKKQKVKTIF…PSSYTKLLEE (64 aa)) constitute an SH3 domain. A Phosphothreonine modification is found at Thr-412. 3 positions are modified to phosphoserine: Ser-414, Ser-420, and Ser-422. A disordered region spans residues 451 to 511 (RRADSARTTS…TNDRSAPIIR (61 aa)). A binds F-actin region spans residues 483-511 (PPFLSGENPFATVKLRPTVTNDRSAPIIR).

Interacts with RAC1. Binds to F-actin. Interacts with FASLG. Interacts (via SH3 domain) with E.coli effector protein EspF(U) (via PXXP motifs). Identified in a complex containing at least WASL, BAIAP2L1 and E.coli EspF(U). Interacts with E.coli intimin receptor Tir. Phosphorylated on tyrosine in response to insulin.

The protein localises to the cytoplasm. Its subcellular location is the cytoskeleton. May function as adapter protein. Involved in the formation of clusters of actin bundles. Plays a role in the reorganization of the actin cytoskeleton in response to bacterial infection. The chain is BAR/IMD domain-containing adapter protein 2-like 1 (BAIAP2L1) from Homo sapiens (Human).